A 558-amino-acid chain; its full sequence is 2-isopropylmalate synthase (558 aa).

The region spanning 31–305 (PRWCSTDLRD…YPNLDFSDMR (275 aa)) is the Pyruvate carboxyltransferase domain. D40, H244, H246, and N280 together coordinate Mg(2+). Positions 439 to 558 (NPDDKGQMKL…NACHPLYKEA (120 aa)) are regulatory domain.

This sequence belongs to the alpha-IPM synthase/homocitrate synthase family. LeuA type 2 subfamily. Homodimer. Mg(2+) is required as a cofactor.

It is found in the cytoplasm. The catalysed reaction is 3-methyl-2-oxobutanoate + acetyl-CoA + H2O = (2S)-2-isopropylmalate + CoA + H(+). It participates in amino-acid biosynthesis; L-leucine biosynthesis; L-leucine from 3-methyl-2-oxobutanoate: step 1/4. Functionally, catalyzes the condensation of the acetyl group of acetyl-CoA with 3-methyl-2-oxobutanoate (2-ketoisovalerate) to form 3-carboxy-3-hydroxy-4-methylpentanoate (2-isopropylmalate). This chain is 2-isopropylmalate synthase, found in Marinomonas sp. (strain MWYL1).